We begin with the raw amino-acid sequence, 359 residues long: 4-hydroxy-3-methylbut-2-en-1-yl diphosphate synthase (flavodoxin) (359 aa).

[4Fe-4S] cluster-binding residues include Cys-265, Cys-268, Cys-300, and Glu-307.

Belongs to the IspG family. The cofactor is [4Fe-4S] cluster.

It catalyses the reaction (2E)-4-hydroxy-3-methylbut-2-enyl diphosphate + oxidized [flavodoxin] + H2O + 2 H(+) = 2-C-methyl-D-erythritol 2,4-cyclic diphosphate + reduced [flavodoxin]. The protein operates within isoprenoid biosynthesis; isopentenyl diphosphate biosynthesis via DXP pathway; isopentenyl diphosphate from 1-deoxy-D-xylulose 5-phosphate: step 5/6. Functionally, converts 2C-methyl-D-erythritol 2,4-cyclodiphosphate (ME-2,4cPP) into 1-hydroxy-2-methyl-2-(E)-butenyl 4-diphosphate. This chain is 4-hydroxy-3-methylbut-2-en-1-yl diphosphate synthase (flavodoxin), found in Lawsonia intracellularis (strain PHE/MN1-00).